A 61-amino-acid chain; its full sequence is Small ribosomal subunit protein uS14 (61 aa).

Residues cysteine 24, cysteine 27, cysteine 40, and cysteine 43 each coordinate Zn(2+).

It belongs to the universal ribosomal protein uS14 family. Zinc-binding uS14 subfamily. As to quaternary structure, part of the 30S ribosomal subunit. Contacts proteins S3 and S10. The cofactor is Zn(2+).

Binds 16S rRNA, required for the assembly of 30S particles and may also be responsible for determining the conformation of the 16S rRNA at the A site. The sequence is that of Small ribosomal subunit protein uS14 from Clostridium perfringens (strain ATCC 13124 / DSM 756 / JCM 1290 / NCIMB 6125 / NCTC 8237 / Type A).